Consider the following 298-residue polypeptide: Phospholipase A1 (298 aa).

The cysteines at positions 4 and 87 are disulfide-linked. N-linked (GlcNAc...) asparagine glycosylation is found at N88 and N122. S134 (nucleophile) is an active-site residue. The Charge relay system role is filled by D162. 2 cysteine pairs are disulfide-bonded: C173/C178 and C216/C225. Catalysis depends on H227, which acts as the Charge relay system. Disulfide bonds link C242/C266, C243/C291, and C259/C264.

The protein belongs to the AB hydrolase superfamily. Lipase family. As to expression, expressed by the venom gland.

The protein resides in the secreted. The enzyme catalyses a 1,2-diacyl-sn-glycero-3-phosphocholine + H2O = a 2-acyl-sn-glycero-3-phosphocholine + a fatty acid + H(+). In terms of biological role, catalyzes the hydrolysis of phosphatidylcholine with phospholipase A1 activity. May act as an allergen and induce hemolytic activity. This Vespula squamosa (Southern yellow jacket) protein is Phospholipase A1.